The primary structure comprises 448 residues: Homogentisate 1,2-dioxygenase (448 aa).

The active-site Proton acceptor is the H303. The Fe cation site is built by H346 and E352. Homogentisate is bound by residues Y361 and H382. Position 382 (H382) interacts with Fe cation.

Belongs to the homogentisate dioxygenase family. Hexamer; dimer of trimers. Fe cation is required as a cofactor.

The catalysed reaction is homogentisate + O2 = 4-maleylacetoacetate + H(+). It participates in amino-acid degradation; L-phenylalanine degradation; acetoacetate and fumarate from L-phenylalanine: step 4/6. Involved in the catabolism of homogentisate (2,5-dihydroxyphenylacetate or 2,5-OH-PhAc), a central intermediate in the degradation of phenylalanine and tyrosine. Catalyzes the oxidative ring cleavage of the aromatic ring of homogentisate to yield maleylacetoacetate. This Bradyrhizobium diazoefficiens (strain JCM 10833 / BCRC 13528 / IAM 13628 / NBRC 14792 / USDA 110) protein is Homogentisate 1,2-dioxygenase.